The sequence spans 382 residues: 8-amino-7-oxononanoate synthase (382 aa).

The substrate site is built by Arg21 and His131. Positions 178, 206, and 232 each coordinate pyridoxal 5'-phosphate. Lys235 is subject to N6-(pyridoxal phosphate)lysine. Thr349 provides a ligand contact to substrate.

It belongs to the class-II pyridoxal-phosphate-dependent aminotransferase family. BioF subfamily. In terms of assembly, homodimer. Requires pyridoxal 5'-phosphate as cofactor.

It catalyses the reaction 6-carboxyhexanoyl-[ACP] + L-alanine + H(+) = (8S)-8-amino-7-oxononanoate + holo-[ACP] + CO2. It functions in the pathway cofactor biosynthesis; biotin biosynthesis. Catalyzes the decarboxylative condensation of pimeloyl-[acyl-carrier protein] and L-alanine to produce 8-amino-7-oxononanoate (AON), [acyl-carrier protein], and carbon dioxide. The chain is 8-amino-7-oxononanoate synthase from Serratia marcescens.